The primary structure comprises 745 residues: Chitin synthase D (745 aa).

5 consecutive transmembrane segments (helical) span residues 26-46 (LAHR…PVHL), 55-75 (VLML…IPWL), 412-432 (TTAL…SSIN), 434-454 (LPVG…FYLG), and 464-484 (LFPL…VYGI). Disordered regions lie at residues 613 to 635 (TGDN…SLHQ) and 672 to 745 (ILPH…ESMV). The segment covering 707–720 (NASTRGSMEGNTPE) has biased composition (polar residues).

Belongs to the chitin synthase family. Class VI subfamily.

It is found in the cell membrane. It catalyses the reaction [(1-&gt;4)-N-acetyl-beta-D-glucosaminyl](n) + UDP-N-acetyl-alpha-D-glucosamine = [(1-&gt;4)-N-acetyl-beta-D-glucosaminyl](n+1) + UDP + H(+). In terms of biological role, polymerizes chitin, a structural polymer of the cell wall and septum, by transferring the sugar moiety of UDP-GlcNAc to the non-reducing end of the growing chitin polymer. The polypeptide is Chitin synthase D (chsD) (Aspergillus fumigatus (strain ATCC MYA-4609 / CBS 101355 / FGSC A1100 / Af293) (Neosartorya fumigata)).